Here is a 393-residue protein sequence, read N- to C-terminus: Methylthioribose kinase (393 aa).

Residues asparagine 38, lysine 53, and 107-109 contribute to the ATP site; that span reads EDL. Aspartate 225 serves as a coordination point for substrate. Position 242–244 (242–244) interacts with ATP; the sequence is DPE. Arginine 332 serves as a coordination point for substrate.

Belongs to the methylthioribose kinase family. As to quaternary structure, homodimer.

The enzyme catalyses 5-(methylsulfanyl)-D-ribose + ATP = 5-(methylsulfanyl)-alpha-D-ribose 1-phosphate + ADP + H(+). Its pathway is amino-acid biosynthesis; L-methionine biosynthesis via salvage pathway; S-methyl-5-thio-alpha-D-ribose 1-phosphate from S-methyl-5'-thioadenosine (hydrolase route): step 2/2. Its function is as follows. Catalyzes the phosphorylation of methylthioribose into methylthioribose-1-phosphate. The protein is Methylthioribose kinase of Bacillus cereus (strain ZK / E33L).